We begin with the raw amino-acid sequence, 323 residues long: rRNA 2'-O-methyltransferase fibrillarin (323 aa).

Residues 1–80 (MGFERGGRGG…AKGGAAGKKV (80 aa)) form a disordered region. An asymmetric dimethylarginine mark is found at arginine 5, arginine 8, arginine 12, arginine 16, arginine 23, arginine 26, arginine 30, arginine 34, arginine 41, arginine 47, arginine 49, arginine 53, arginine 57, arginine 62, arginine 64, and arginine 68. Positions 8–76 (RGGARGGGRG…ARGGAKGGAA (69 aa)) are enriched in gly residues. Residues 174-175 (TS), 193-194 (EF), 218-219 (DA), and 238-241 (DVAQ) each bind S-adenosyl-L-methionine.

The protein belongs to the methyltransferase superfamily. Fibrillarin family. As to quaternary structure, component of box C/D small nucleolar ribonucleoprotein (snoRNP) particles. By homology to other fibrillarins, some or all of the N-terminal domain arginines are modified to asymmetric dimethylarginine (DMA).

It is found in the nucleus. Its subcellular location is the nucleolus. The enzyme catalyses L-glutaminyl-[histone H2A] + S-adenosyl-L-methionine = N(5)-methyl-L-glutaminyl-[histone H2A] + S-adenosyl-L-homocysteine + H(+). S-adenosyl-L-methionine-dependent methyltransferase that has the ability to methylate both RNAs and proteins. Involved in pre-rRNA processing. Utilizes the methyl donor S-adenosyl-L-methionine to catalyze the site-specific 2'-hydroxyl methylation of ribose moieties in pre-ribosomal RNA. Site specificity is provided by a guide RNA that base pairs with the substrate. Methylation occurs at a characteristic distance from the sequence involved in base pairing with the guide RNA. Also acts as a protein methyltransferase by mediating methylation of 'Gln-105' of histone H2A (H2AQ105me), a modification that impairs binding of the FACT complex and is specifically present at 35S ribosomal DNA locus. The polypeptide is rRNA 2'-O-methyltransferase fibrillarin (nop-1) (Neurospora crassa (strain ATCC 24698 / 74-OR23-1A / CBS 708.71 / DSM 1257 / FGSC 987)).